Consider the following 115-residue polypeptide: uncharacterized protein (115 aa).

A signal peptide spans 1–26 (MNFKKTVVSALSISALALSVSGVASA). Residues 36–114 (VKNISISPTH…AVFGKVYVTV (79 aa)) enclose the BIG2 domain.

This is an uncharacterized protein from Bacillus subtilis (strain 168).